Consider the following 260-residue polypeptide: Ribosome maturation factor RimP (260 aa).

Residues 198-260 (QSLGILPPPP…RGDIDPIEGE (63 aa)) form a disordered region. 2 stretches are compositionally biased toward basic and acidic residues: residues 210–228 (AKTD…ENGK) and 238–254 (NTKE…RGDI).

The protein belongs to the RimP family.

Its subcellular location is the cytoplasm. Its function is as follows. Required for maturation of 30S ribosomal subunits. The sequence is that of Ribosome maturation factor RimP from Nitrobacter winogradskyi (strain ATCC 25391 / DSM 10237 / CIP 104748 / NCIMB 11846 / Nb-255).